Here is a 301-residue protein sequence, read N- to C-terminus: Probable alpha-L-glutamate ligase (301 aa).

The ATP-grasp domain occupies 104 to 287; the sequence is LQLLSRRGIG…VAGIIIEHLE (184 aa). Residues K141, 178–179, D187, and 211–213 contribute to the ATP site; these read EY and RSN. Mg(2+) is bound by residues D248, E260, and N262. D248, E260, and N262 together coordinate Mn(2+).

It belongs to the RimK family. Requires Mg(2+) as cofactor. Mn(2+) is required as a cofactor.

The polypeptide is Probable alpha-L-glutamate ligase (Pseudomonas fluorescens (strain SBW25)).